Here is a 118-residue protein sequence, read N- to C-terminus: Large ribosomal subunit protein bL20 (118 aa).

Belongs to the bacterial ribosomal protein bL20 family.

Functionally, binds directly to 23S ribosomal RNA and is necessary for the in vitro assembly process of the 50S ribosomal subunit. It is not involved in the protein synthesizing functions of that subunit. The sequence is that of Large ribosomal subunit protein bL20 from Pseudoalteromonas atlantica (strain T6c / ATCC BAA-1087).